The following is a 103-amino-acid chain: MGNIFSPTHLIVILLIIIVLFGRGKVSELMGDVAKGIKAFKKNMKDEEDILEDKLERAHHSETVDVEPQKFQSLSVKRATTRVKGSSSSRKGKTSVVKKQRVK.

Residues 1-21 form a helical membrane-spanning segment; the sequence is MGNIFSPTHLIVILLIIIVLF. The tract at residues 77–103 is disordered; the sequence is KRATTRVKGSSSSRKGKTSVVKKQRVK. The span at 90–103 shows a compositional bias: basic residues; it reads RKGKTSVVKKQRVK.

Belongs to the TatA/E family. The Tat system comprises two distinct complexes: a TatABC complex, containing multiple copies of TatA, TatB and TatC subunits, and a separate TatA complex, containing only TatA subunits. Substrates initially bind to the TatABC complex, which probably triggers association of the separate TatA complex to form the active translocon.

Its subcellular location is the cell inner membrane. Its function is as follows. Part of the twin-arginine translocation (Tat) system that transports large folded proteins containing a characteristic twin-arginine motif in their signal peptide across membranes. TatA could form the protein-conducting channel of the Tat system. The chain is Sec-independent protein translocase protein TatA from Bartonella henselae (strain ATCC 49882 / DSM 28221 / CCUG 30454 / Houston 1) (Rochalimaea henselae).